Reading from the N-terminus, the 178-residue chain is ATP synthase subunit delta (178 aa).

It belongs to the ATPase delta chain family. F-type ATPases have 2 components, F(1) - the catalytic core - and F(0) - the membrane proton channel. F(1) has five subunits: alpha(3), beta(3), gamma(1), delta(1), epsilon(1). F(0) has three main subunits: a(1), b(2) and c(10-14). The alpha and beta chains form an alternating ring which encloses part of the gamma chain. F(1) is attached to F(0) by a central stalk formed by the gamma and epsilon chains, while a peripheral stalk is formed by the delta and b chains.

It is found in the cell inner membrane. Functionally, f(1)F(0) ATP synthase produces ATP from ADP in the presence of a proton or sodium gradient. F-type ATPases consist of two structural domains, F(1) containing the extramembraneous catalytic core and F(0) containing the membrane proton channel, linked together by a central stalk and a peripheral stalk. During catalysis, ATP synthesis in the catalytic domain of F(1) is coupled via a rotary mechanism of the central stalk subunits to proton translocation. This protein is part of the stalk that links CF(0) to CF(1). It either transmits conformational changes from CF(0) to CF(1) or is implicated in proton conduction. The polypeptide is ATP synthase subunit delta (Thioalkalivibrio sulfidiphilus (strain HL-EbGR7)).